Consider the following 305-residue polypeptide: HPr kinase/phosphorylase (305 aa).

Catalysis depends on residues His138 and Lys159. Residue 153–160 participates in ATP binding; it reads GESGIGKS. Residue Ser160 coordinates Mg(2+). Residue Asp177 is the Proton acceptor; for phosphorylation activity. Proton donor; for dephosphorylation activity of the active site. Positions 201–210 are important for the catalytic mechanism of both phosphorylation and dephosphorylation; it reads IEIRGIGILD. Glu202 lines the Mg(2+) pocket. Arg243 is a catalytic residue. Residues 264 to 269 are important for the catalytic mechanism of dephosphorylation; the sequence is PVRPGR.

This sequence belongs to the HPrK/P family. In terms of assembly, homohexamer. Mg(2+) serves as cofactor.

The catalysed reaction is [HPr protein]-L-serine + ATP = [HPr protein]-O-phospho-L-serine + ADP + H(+). The enzyme catalyses [HPr protein]-O-phospho-L-serine + phosphate + H(+) = [HPr protein]-L-serine + diphosphate. In terms of biological role, catalyzes the ATP- as well as the pyrophosphate-dependent phosphorylation of a specific serine residue in HPr, a phosphocarrier protein of the phosphoenolpyruvate-dependent sugar phosphotransferase system (PTS). HprK/P also catalyzes the pyrophosphate-producing, inorganic phosphate-dependent dephosphorylation (phosphorolysis) of seryl-phosphorylated HPr (P-Ser-HPr). The two antagonistic activities of HprK/P are regulated by several intracellular metabolites, which change their concentration in response to the absence or presence of rapidly metabolisable carbon sources (glucose, fructose, etc.) in the growth medium. Therefore, by controlling the phosphorylation state of HPr, HPrK/P is a sensor enzyme that plays a major role in the regulation of carbon metabolism and sugar transport: it mediates carbon catabolite repression (CCR), and regulates PTS-catalyzed carbohydrate uptake and inducer exclusion. In Caldanaerobacter subterraneus subsp. tengcongensis (strain DSM 15242 / JCM 11007 / NBRC 100824 / MB4) (Thermoanaerobacter tengcongensis), this protein is HPr kinase/phosphorylase.